The primary structure comprises 490 residues: ATP synthase subunit beta (490 aa).

ATP is bound at residue 175-182 (GGAGVGKT).

It belongs to the ATPase alpha/beta chains family. As to quaternary structure, F-type ATPases have 2 components, CF(1) - the catalytic core - and CF(0) - the membrane proton channel. CF(1) has five subunits: alpha(3), beta(3), gamma(1), delta(1), epsilon(1). CF(0) has three main subunits: a(1), b(2) and c(9-12). The alpha and beta chains form an alternating ring which encloses part of the gamma chain. CF(1) is attached to CF(0) by a central stalk formed by the gamma and epsilon chains, while a peripheral stalk is formed by the delta and b chains.

Its subcellular location is the cell membrane. The enzyme catalyses ATP + H2O + 4 H(+)(in) = ADP + phosphate + 5 H(+)(out). Produces ATP from ADP in the presence of a proton gradient across the membrane. The catalytic sites are hosted primarily by the beta subunits. The sequence is that of ATP synthase subunit beta from Acidothermus cellulolyticus (strain ATCC 43068 / DSM 8971 / 11B).